Consider the following 109-residue polypeptide: Putative small proline-rich protein 2J (109 aa).

5 consecutive repeat copies span residues 21–29 (RSAQSPVLC), 30–38 (QSAPSLVLL), 39–47 (QSAQSPIHC), 48–56 (QSALSHAHL), and 57–65 (SHASRNALL). Residues 21-65 (RSAQSPVLCQSAPSLVLLQSAQSPIHCQSALSHAHLSHASRNALL) form a 5 X 9 AA approximate tandem repeats region. Residues 76-109 (AHPRANKGFSSLQNQKKRTESILHKSIATPPSSI) form a disordered region.

It belongs to the cornifin (SPRR) family. In terms of tissue distribution, not expressed in uterus.

It localises to the cytoplasm. Functionally, cross-linked envelope protein of keratinocytes. It is a keratinocyte protein that first appears in the cell cytosol, but ultimately becomes cross-linked to membrane proteins by transglutaminase. All that results in the formation of an insoluble envelope beneath the plasma membrane. In Mus musculus (Mouse), this protein is Putative small proline-rich protein 2J (Sprr2j).